The primary structure comprises 129 residues: Protein FYV12 (129 aa).

Asn91 carries N-linked (GlcNAc...) asparagine glycosylation. Residues 109-128 (LMTTFLLYVLYVCIYISAFI) form a helical membrane-spanning segment.

The protein localises to the membrane. Involved in K1 killer toxin resistance. This is Protein FYV12 (FYV12) from Saccharomyces cerevisiae (strain ATCC 204508 / S288c) (Baker's yeast).